We begin with the raw amino-acid sequence, 334 residues long: Methylthioribose-1-phosphate isomerase (334 aa).

Substrate contacts are provided by residues 44 to 46 (RGA), R87, and Q192. Catalysis depends on D233, which acts as the Proton donor. A substrate-binding site is contributed by 243–244 (NK).

The protein belongs to the eIF-2B alpha/beta/delta subunits family. MtnA subfamily.

It catalyses the reaction 5-(methylsulfanyl)-alpha-D-ribose 1-phosphate = 5-(methylsulfanyl)-D-ribulose 1-phosphate. It participates in amino-acid biosynthesis; L-methionine biosynthesis via salvage pathway; L-methionine from S-methyl-5-thio-alpha-D-ribose 1-phosphate: step 1/6. Its function is as follows. Catalyzes the interconversion of methylthioribose-1-phosphate (MTR-1-P) into methylthioribulose-1-phosphate (MTRu-1-P). This chain is Methylthioribose-1-phosphate isomerase, found in Dehalococcoides mccartyi (strain ATCC BAA-2266 / KCTC 15142 / 195) (Dehalococcoides ethenogenes (strain 195)).